The primary structure comprises 355 residues: Poly(3-hydroxyalkanoate) polymerase subunit PhaC (355 aa).

Positions 68–333 (PLLIVYALVN…LAFPGGHIGI (266 aa)) constitute an AB hydrolase-1 domain. Residue Cys-148 is part of the active site.

It belongs to the PHA/PHB synthase family. Type III PhaC subfamily. In terms of assembly, forms a heterodimer with PhaE, which may multimerize in the presence of 3-hydroxybutyryl-CoA.

It is found in the cytoplasm. The catalysed reaction is (3R)-3-hydroxybutanoyl-CoA + [(3R)-hydroxybutanoate](n) = [(3R)-hydroxybutanoate](n+1) + CoA. It functions in the pathway biopolymer metabolism; poly-(R)-3-hydroxybutanoate biosynthesis. In terms of biological role, polymerizes D(-)-3-hydroxybutyryl-CoA to create PHB which consists of thousands of hydroxybutyrate molecules linked end to end. PHB serves as an intracellular energy reserve material when cells grow under conditions of nutrient limitation. The chain is Poly(3-hydroxyalkanoate) polymerase subunit PhaC from Thiocystis violacea.